Consider the following 161-residue polypeptide: Gamma-glutamylaminecyclotransferase A (161 aa).

A substrate-binding site is contributed by 26–29 (YGTL). The active-site Proton acceptor is E101.

Belongs to the gamma-glutamylcyclotransferase family.

The enzyme catalyses epsilon-(gamma-L-glutamyl)-L-lysine = 5-oxo-L-proline + L-lysine. Its function is as follows. May contribute to degradation of proteins cross-linked by transglutaminases by degrading the cross-link between a lysine and a glutamic acid residue. Catalyzes the formation of 5-oxo-L-proline from L-gamma-glutamyl-L-epsilon-lysine. The chain is Gamma-glutamylaminecyclotransferase A (ggact.1) from Danio rerio (Zebrafish).